The primary structure comprises 415 residues: Esterase FrsA (415 aa).

The protein belongs to the FrsA family. In terms of assembly, monomer in solution. Homodimer. Forms a 1:1 complex with the unphosphorylated form of the EIIA component of the glucose-specific PTS system (IIAGlc).

The catalysed reaction is a carboxylic ester + H2O = an alcohol + a carboxylate + H(+). Functionally, catalyzes the hydrolysis of esters. In vitro, prefers short chain alkanoate ester as substrate. Displays highest activity towards p-nitrophenyl acetate (pNPA). Has weaker activity towards p-nitrophenyl butyrate (pNPB). The protein is Esterase FrsA of Vibrio vulnificus (strain CMCP6).